A 441-amino-acid polypeptide reads, in one-letter code: Protein kinase C and casein kinase substrate in neurons protein 1 (441 aa).

Phosphoserine is present on residues serine 2 and serine 76. The F-BAR domain maps to 10–280; the sequence is EEITDSFWEV…AIRGADAQED (271 aa). Residues 23 to 272 adopt a coiled-coil conformation; the sequence is KRTVKRIDDG…HVYRELEQAI (250 aa). At threonine 181 the chain carries Phosphothreonine. Positions 297–380 are disordered; sequence PQFEEWNPDL…ANGGANPFED (84 aa). The segment covering 311-321 has biased composition (basic and acidic residues); sequence AKKEKQPKKAE. Residues 324–355 are compositionally biased toward polar residues; sequence TLSNATGAVESTSQAGDRGSVSSYDRGQTYAT. Phosphoserine occurs at positions 343, 345, 346, 358, and 362. The SH3 domain occupies 382–441; that stretch reads AKGVRVRALYDYDGQEQDELSFKAGDELTKLGEEDEQGWCRGRLDSGQLGLYPANYVEAI. Tyrosine 391 carries the phosphotyrosine modification. Serine 402 and serine 427 each carry phosphoserine.

Belongs to the PACSIN family. Homodimer. May form heterooligomers with other PACSINs. Interacts with both COBL and DBNL. Identified in a complex composed of COBL, PACSIN1 and WASL. Interacts with EHD3. Interacts (via SH3 domain) with SYNJ1 and WASL. Interacts (via SH3 domain) with DNM1; the interaction is reduced by DNM1 phosphorylation. Interacts with DNM2 and DNM3. Interacts with MAPT. Interacts with EHD1. Interacts with TRPV4. Phosphorylated by casein kinase 2 (CK2) and protein kinase C (PKC). Highly expressed in brain. Detected in hippocampus and dorsal root ganglion neurons. Detected in rod photoreceptor terminals in the outer plexiform layer of the retina (at protein level). In CNS neurons, high levels in the pyramidal cells of the hippocampus, Purkinje cells of the cerebellum and large neurons of the cortex and brain stem.

The protein resides in the cytoplasm. It localises to the cell projection. The protein localises to the synapse. It is found in the synaptosome. Its subcellular location is the ruffle membrane. The protein resides in the membrane. It localises to the cytoplasmic vesicle membrane. The protein localises to the cytosol. It is found in the cell membrane. In terms of biological role, binds to membranes via its F-BAR domain and mediates membrane tubulation. Plays a role in the reorganization of the microtubule cytoskeleton via its interaction with MAPT; this decreases microtubule stability and inhibits MAPT-induced microtubule polymerization. Plays a role in cellular transport processes by recruiting DNM1, DNM2 and DNM3 to membranes. Plays a role in the reorganization of the actin cytoskeleton and in neuron morphogenesis via its interaction with COBL and WASL, and by recruiting COBL to the cell cortex. Plays a role in the regulation of neurite formation, neurite branching and the regulation of neurite length. Required for normal synaptic vesicle endocytosis; this process retrieves previously released neurotransmitters to accommodate multiple cycles of neurotransmission. Required for normal excitatory and inhibitory synaptic transmission. The polypeptide is Protein kinase C and casein kinase substrate in neurons protein 1 (Pacsin1) (Mus musculus (Mouse)).